A 669-amino-acid polypeptide reads, in one-letter code: Hypoxia-inducible factor 3-alpha (669 aa).

The interval 1 to 27 (MALGLQRARSTTELRKEKSRDAARSRR) is disordered. A compositionally biased stretch (basic and acidic residues) spans 10 to 27 (STTELRKEKSRDAARSRR). In terms of domain architecture, bHLH spans 14-67 (LRKEKSRDAARSRRSQETEVLYQLAHTLPFARGVSAHLDKASIMRLTISYLRMH). Residues 77-100 (QVGAGGEPLDACYLKALEGFVMVL) are nuclear localization signal. 2 PAS domains span residues 82–154 (GEPL…LSRR) and 227–297 (PHPG…LSKG). Residues 230 to 274 (GSLEPPLGRGAFLSRHSLDMKFTYCDDRIAEVAGYSPDDLIGCSA) form a nuclear export signal region. The interval 354-389 (EQTEQHSRRPIQRGAPSQKDTPNPGDSLDTPGPRIL) is disordered. The short motif at 414–418 (LRRLL) is the LRRLL element. Residues 430–444 (TPSTPLATRHPQSPL) are compositionally biased toward polar residues. The tract at residues 430-451 (TPSTPLATRHPQSPLSADLPDE) is disordered. Positions 452 to 581 (LPVGTENVHR…TLAQSSEDED (130 aa)) are ODD. Residues 454-506 (VGTENVHRLFTSGKDTEAVETDLDIAQDADALDLEMLAPYISMDDDFQLNASE) form an NTAD region. A Glycyl lysine isopeptide (Lys-Gly) (interchain with G-Cter in ubiquitin) cross-link involves residue Lys467. The LAPYISMD motif lies at 490-497 (LAPYISMD). A 4-hydroxyproline modification is found at Pro492. 2 disordered regions span residues 523–600 (RARS…SPEH) and 619–669 (APGS…AQAD). Composition is skewed to low complexity over residues 530–541 (LSPPALEPSLLP) and 550–564 (SCSS…ASSP). Lys570 participates in a covalent cross-link: Glycyl lysine isopeptide (Lys-Gly) (interchain with G-Cter in ubiquitin). Positions 629–646 (PLLNLNEPLGLGPSLLSP) are enriched in low complexity.

Isoform 2 interacts (via ODD domain) with VHL (via beta domain). Isoform 4 interacts with HIF1A; the interaction inhibits the binding of HIF1A to hypoxia-responsive element (HRE) and HIF1A/ARNT-dependent transcriptional activation. Isoform 4 interacts with ARNT; the interaction occurs in a HIF1A- and DNA-binding-independent manner and does not induce HIF1A/ARNT-dependent transcriptional activation. Isoform 4 interacts with EPAS1. Interacts with BAD, BCL2L2 and MCL1. Post-translationally, in normoxia, hydroxylated on Pro-492 in the oxygen-dependent degradation domain (ODD) by prolyl hydroxylase(s) (PHD). The hydroxylated proline promotes interaction with VHL, initiating rapid ubiquitination and subsequent proteasomal degradation. Ubiquitinated; ubiquitination occurs in a VHL- and oxygen-dependent pathway and subsequently targeted for proteasomal degradation. As to expression, expressed in vascular cells (at protein level). Expressed in kidney. Expressed in lung epithelial cells. Expressed in endothelial cells (venous and arterial cells from umbilical cord and aortic endothelial cells) and in vascular smooth muscle cells (aorta). Strongly expressed in the heart, placenta, and skeletal muscle, whereas a weak expression profile was found in the lung, liver, and kidney. Expressed weakly in cell renal cell carcinoma (CC-RCC) compared to normal renal cells. Expression is down-regulated in numerous kidney tumor cells compared to non tumor kidney tissues. Isoform 2 is expressed in heart, placenta, lung, liver, skeletal muscle and pancreas and in numerous cancer cell lines. Isoform 3 and isoform 4 are weakly expressed in heart, placenta, lung, liver, skeletal muscle and pancreas. Isoform 4 is expressed in fetal tissues, such as heart, brain, thymus, lung, liver, skeletal kidney and spleen. Isoform 3 is weakly expressed in fetal tissues, such as liver and kidney.

It is found in the nucleus. Its subcellular location is the cytoplasm. The protein localises to the nucleus speckle. The protein resides in the mitochondrion. Its function is as follows. Acts as a transcriptional regulator in adaptive response to low oxygen tension. Acts as a regulator of hypoxia-inducible gene expression. Functions as an inhibitor of angiogenesis in hypoxic cells of the cornea. Plays a role in the development of the cardiorespiratory system. May also be involved in apoptosis. Functionally, attenuates the ability of transcription factor HIF1A to bind to hypoxia-responsive elements (HRE) located within the enhancer/promoter of hypoxia-inducible target genes and hence inhibits HRE-driven transcriptional activation. Also inhibits hypoxia-inducible ARNT-mediated gene expression. In terms of biological role, attenuates the ability of transcription factor HIF1A to bind to hypoxia-responsive elements (HRE) located within the enhancer/promoter of hypoxia-inducible target genes and hence inhibits HRE-driven transcriptional activation. Attenuates the ability of transcription factor HIF1A and EPAS1/HIF2A to bind to hypoxia-responsive elements (HRE) located within the enhancer/promoter of hypoxia-inducible target genes and hence inhibits HRE-driven transcriptional activation. May act as a tumor suppressor and inhibits malignant cell transformation. The sequence is that of Hypoxia-inducible factor 3-alpha from Homo sapiens (Human).